A 473-amino-acid chain; its full sequence is MQKTKMIFTVGPASETEEIVTAFIKAGMNASRHNFSHGDHAEHGGRIALVKKVRAKLNKPVAICLDTKGPEIRTGDFNPSKLELQKGSKFTIVCGEEIVGDATKCSISYKDLYKDVKPGNTILIDDGLVGLTVEAIEGTNVICTVANTGLVGSHKGVNVPNVSIQLPAMTEKDKSDLIFGCKEEIDMVSASFIRKPEDVLAIRKVLNENGGENIQIFSKIENQEGVDNIDAIIEVSDGIMVARGDMGVEIPIQRVPLIQKMIIKKCNAVGKPVITATQMLDSMMRNPRPTRAEASDIANAIFDGTDAIMLSGESANGSYPIEAVTTMAKIAQEAENEINYDKFLAERKGNEKKNTSDVISLGTCTAAADLEASAIITATQTGSTARTVSKYRPKAPVIAVTPSEKVARKLAMSWGVHPIISDKFGSTDELISTSVDKALEAGYVQKGDLVVVAAGVPTNVSGTTNMLKVQVVE.

Arg32 lines the substrate pocket. The K(+) site is built by Asn34, Ser36, Asp66, and Thr67. 34 to 37 (NFSH) provides a ligand contact to ATP. Residues Arg73 and Lys155 each coordinate ATP. Glu221 provides a ligand contact to Mg(2+). Residues Gly244, Asp245, and Thr277 each contribute to the substrate site. Asp245 contributes to the Mg(2+) binding site.

The protein belongs to the pyruvate kinase family. In terms of assembly, homotetramer. Mg(2+) is required as a cofactor. K(+) serves as cofactor.

It catalyses the reaction pyruvate + ATP = phosphoenolpyruvate + ADP + H(+). The protein operates within carbohydrate degradation; glycolysis; pyruvate from D-glyceraldehyde 3-phosphate: step 5/5. This Clostridium acetobutylicum (strain ATCC 824 / DSM 792 / JCM 1419 / IAM 19013 / LMG 5710 / NBRC 13948 / NRRL B-527 / VKM B-1787 / 2291 / W) protein is Pyruvate kinase (pyk).